A 171-amino-acid chain; its full sequence is Zinc finger A20 and AN1 domain-containing stress-associated protein 8 (171 aa).

The A20-type zinc-finger motif lies at 11-45 (PEGPILCINNCGFFGSAATMNMCSKCHKEMIMKQE). Residues cysteine 17, cysteine 21, cysteine 33, cysteine 36, cysteine 112, cysteine 115, cysteine 126, cysteine 128, cysteine 133, histidine 136, histidine 142, and cysteine 144 each contribute to the Zn(2+) site. The segment at 106–152 (REGPNRCSTCRKRVGLTGFNCRCGNLYCAMHRYSDKHDCQFDYRTAA) adopts an AN1-type zinc-finger fold.

Its function is as follows. May be involved in environmental stress response. The sequence is that of Zinc finger A20 and AN1 domain-containing stress-associated protein 8 (SAP8) from Oryza sativa subsp. indica (Rice).